The following is a 1422-amino-acid chain: Guanine nucleotide exchange factor subunit RIC1 (1422 aa).

WD repeat units lie at residues 64–103 and 304–343; these read TQFG…GDKY and NKTG…LICT. 2 disordered regions span residues 442–462 and 986–1005; these read NPKY…SPFA and SGES…SSSG. A compositionally biased stretch (basic and acidic residues) spans 449-460; it reads RAERMPRHEKSP. Phosphothreonine occurs at positions 991 and 995. Phosphoserine occurs at positions 1014, 1016, 1018, 1036, and 1171. A disordered region spans residues 1021–1048; the sequence is AENVPPGKFGLQKTLSMPTGPSGKRWSK. Disordered stretches follow at residues 1179 to 1198 and 1355 to 1422; these read THRD…DAFL and DTFQ…CSVS. A compositionally biased stretch (polar residues) spans 1378-1396; it reads GSCSHGSISQSEPGSNNVV. The span at 1403-1412 shows a compositional bias: acidic residues; sequence TTQADEEEPL.

Belongs to the RIC1 family. As to quaternary structure, forms a complex with RGP1; the interaction enhances RAB6A GTPase activity. Interacts (via central domain) with RGP1. Interacts with RAB6A; the interaction is direct with a preference for RAB6A-GDP. Interacts (via C-terminus domain) with RAB33B; the interaction is direct with a preference for RAB33B-GTP. Interacts with GJA1. In terms of tissue distribution, expressed in the eye lens.

Its subcellular location is the cytoplasm. The protein resides in the cytosol. It is found in the membrane. In terms of biological role, the RIC1-RGP1 complex acts as a guanine nucleotide exchange factor (GEF), which activates RAB6A by exchanging bound GDP for free GTP, and may thereby be required for efficient fusion of endosome-derived vesicles with the Golgi compartment. The RIC1-RGP1 complex participates in the recycling of mannose-6-phosphate receptors. Required for phosphorylation and localization of GJA1. Is a regulator of procollagen transport and secretion, and is required for correct cartilage morphogenesis and development of the craniofacial skeleton. This is Guanine nucleotide exchange factor subunit RIC1 from Mus musculus (Mouse).